The chain runs to 491 residues: Trehalose-6-phosphate synthase (491 aa).

A D-glucose 6-phosphate-binding site is contributed by Arg-22. 42–43 (GG) contacts UDP-alpha-D-glucose. D-glucose 6-phosphate-binding residues include Tyr-100 and Asp-154. Positions 296 and 301 each coordinate UDP-alpha-D-glucose. D-glucose 6-phosphate is bound at residue Arg-334. 399-403 (LVAKE) provides a ligand contact to UDP-alpha-D-glucose.

It belongs to the glycosyltransferase 20 family. In terms of assembly, homotetramer.

It catalyses the reaction ADP-alpha-D-glucose + D-glucose 6-phosphate = alpha,alpha-trehalose 6-phosphate + ADP + H(+). The enzyme catalyses CDP-alpha-D-glucose + D-glucose 6-phosphate = alpha,alpha-trehalose 6-phosphate + CDP + H(+). The catalysed reaction is GDP-alpha-D-glucose + D-glucose 6-phosphate = alpha,alpha-trehalose 6-phosphate + GDP + H(+). It carries out the reaction TDP-alpha-D-glucose + D-glucose 6-phosphate = 5-methyl-UDP + alpha,alpha-trehalose 6-phosphate + H(+). It catalyses the reaction D-glucose 6-phosphate + UDP-alpha-D-glucose = alpha,alpha-trehalose 6-phosphate + UDP + H(+). It functions in the pathway glycan biosynthesis; trehalose biosynthesis. Functionally, probably involved in the osmoprotection via the biosynthesis of trehalose and in the production of glycogen and alpha-glucan via the TreS-Pep2 branch involved in the biosynthesis of maltose-1-phosphate (M1P). Catalyzes the transfer of glucose from UDP-glucose (UDP-Glc) to D-glucose 6-phosphate (Glc-6-P) to form trehalose-6-phosphate. Probably also able to use ADP-Glc, CDP-Glc, GDP-Glc and TDP-Glc as glucosyl donors. In Mycolicibacterium vanbaalenii (strain DSM 7251 / JCM 13017 / BCRC 16820 / KCTC 9966 / NRRL B-24157 / PYR-1) (Mycobacterium vanbaalenii), this protein is Trehalose-6-phosphate synthase.